We begin with the raw amino-acid sequence, 147 residues long: MEKKFYLVREDVLPEAMKKVVLAKQLLERKKAASVAEAAQLANISRGVFYKYRDAIFPFQAVTKENIVTLFFHLEDRSGTLSQLLGVVAAAGCNVLTIHQTIPLQGRANVTLSVSTNDMNEEIDELLAKLKQLEFVEKVEIVGSGVY.

The ACT domain maps to 69-144 (TLFFHLEDRS…FVEKVEIVGS (76 aa)).

This sequence belongs to the UPF0735 family.

The chain is UPF0735 ACT domain-containing protein GK2605 from Geobacillus kaustophilus (strain HTA426).